The following is a 570-amino-acid chain: 15-cis-phytoene desaturase, chloroplastic/chromoplastic (570 aa).

Residues 1 to 91 (MSIVGLVSVV…AQLSASFRSS (91 aa)) constitute a chloroplast and chromoplast transit peptide. FAD is bound by residues 104-120 (GAGL…ADAG), Ala-108, 127-128 (ES), Lys-135, 152-153 (HI), and Tyr-158. Residue Arg-293 participates in substrate binding. FAD is bound at residue Asp-524. Ala-532 serves as a coordination point for substrate. Met-534 serves as a coordination point for FAD.

This sequence belongs to the carotenoid/retinoid oxidoreductase family. Homotetramer. FAD serves as cofactor. As to expression, expressed more strongly in flowers than in leaves.

Its subcellular location is the plastid. It localises to the chloroplast. It is found in the chromoplast. The protein localises to the membrane. The catalysed reaction is 2 a plastoquinone + 15-cis-phytoene = 9,9',15-tri-cis-zeta-carotene + 2 a plastoquinol. It functions in the pathway carotenoid biosynthesis; lycopene biosynthesis. Functionally, converts phytoene into zeta-carotene via the intermediary of phytofluene by the symmetrical introduction of two double bonds at the C-11 and C-11' positions of phytoene with a concomitant isomerization of two neighboring double bonds at the C9 and C9' positions from trans to cis. This chain is 15-cis-phytoene desaturase, chloroplastic/chromoplastic (PDS1), found in Narcissus pseudonarcissus (Daffodil).